The following is a 353-amino-acid chain: Guanine nucleotide-binding protein subunit alpha (353 aa).

Residues 1–26 (MGCGMSTEEKEGKARNEEIENQLKRD) are disordered. Residue Gly-2 is the site of N-myristoyl glycine attachment. Cys-3 is lipidated: S-palmitoyl cysteine. Positions 7–26 (TEEKEGKARNEEIENQLKRD) are enriched in basic and acidic residues. The G-alpha domain maps to 32-353 (NEIKMLLLGA…QENLRLCGLI (322 aa)). The tract at residues 35–48 (KMLLLGAGESGKST) is G1 motif. GTP-binding residues include Glu-43, Ser-44, Gly-45, Lys-46, Ser-47, Thr-48, Asp-150, Leu-175, Thr-181, Gly-203, Asn-269, Lys-270, Asp-272, and Ala-325. Ser-47 contributes to the Mg(2+) binding site. The interval 173–181 (DVLRSRVKT) is G2 motif. Thr-181 contributes to the Mg(2+) binding site. The interval 196-205 (YRMFDVGGQR) is G3 motif. The interval 265 to 272 (ILFLNKID) is G4 motif. Residues 323–328 (TCATDT) form a G5 motif region.

It belongs to the G-alpha family. G(q) subfamily. In terms of assembly, g proteins are composed of 3 units; alpha, beta and gamma. The alpha chain contains the guanine nucleotide binding site. Mg(2+) is required as a cofactor.

In terms of biological role, guanine nucleotide-binding proteins (G proteins) are involved as modulators or transducers in various transmembrane signaling systems. This is Guanine nucleotide-binding protein subunit alpha from Cryphonectria parasitica (Chestnut blight fungus).